Reading from the N-terminus, the 576-residue chain is Arginine--tRNA ligase (576 aa).

Residues 132–142 (ANPTGPMHIGH) carry the 'HIGH' region motif.

This sequence belongs to the class-I aminoacyl-tRNA synthetase family. As to quaternary structure, monomer.

It localises to the cytoplasm. The enzyme catalyses tRNA(Arg) + L-arginine + ATP = L-arginyl-tRNA(Arg) + AMP + diphosphate. This Ehrlichia ruminantium (strain Gardel) protein is Arginine--tRNA ligase.